The primary structure comprises 78 residues: RRINNDCQNFIGNRAMYEKVDWICKDCANIFRKDGLLNNCRSNCFYNTEFLWCIDATENTRNKEQLEQWAAILGAGWN.

3 disulfides stabilise this stretch: Cys7–Cys44, Cys24–Cys40, and Cys27–Cys53.

This sequence belongs to the arthropod CHH/MIH/GIH/VIH hormone family. Produced by the medulla terminalis X-organ in the eyestalks and transported to the sinus gland where it is stored and released.

Its subcellular location is the secreted. Functionally, represses the synthesis of methyl farnesoate, the precursor of insect juvenile hormone III in the mandibular organ. In Cancer pagurus (Rock crab), this protein is Mandibular organ-inhibiting hormone 1.